The chain runs to 344 residues: Arginine N-succinyltransferase (344 aa).

Leu125 contributes to the succinyl-CoA binding site. His229 (proton donor) is an active-site residue.

Belongs to the arginine N-succinyltransferase family.

It carries out the reaction succinyl-CoA + L-arginine = N(2)-succinyl-L-arginine + CoA + H(+). The protein operates within amino-acid degradation; L-arginine degradation via AST pathway; L-glutamate and succinate from L-arginine: step 1/5. Its function is as follows. Catalyzes the transfer of succinyl-CoA to arginine to produce N(2)-succinylarginine. This Escherichia fergusonii (strain ATCC 35469 / DSM 13698 / CCUG 18766 / IAM 14443 / JCM 21226 / LMG 7866 / NBRC 102419 / NCTC 12128 / CDC 0568-73) protein is Arginine N-succinyltransferase.